The chain runs to 237 residues: Ribonuclease PH (237 aa).

Phosphate-binding positions include Arg-86 and 124–126 (GTR).

The protein belongs to the RNase PH family. As to quaternary structure, homohexameric ring arranged as a trimer of dimers.

The enzyme catalyses tRNA(n+1) + phosphate = tRNA(n) + a ribonucleoside 5'-diphosphate. Phosphorolytic 3'-5' exoribonuclease that plays an important role in tRNA 3'-end maturation. Removes nucleotide residues following the 3'-CCA terminus of tRNAs; can also add nucleotides to the ends of RNA molecules by using nucleoside diphosphates as substrates, but this may not be physiologically important. Probably plays a role in initiation of 16S rRNA degradation (leading to ribosome degradation) during starvation. This chain is Ribonuclease PH, found in Cereibacter sphaeroides (strain KD131 / KCTC 12085) (Rhodobacter sphaeroides).